Reading from the N-terminus, the 129-residue chain is MTTAFDAAHTEGPGFVGIRFCQECNNMLYPKEDKENKILLYACRNCDYKQEADSNCIYVNKIMHEIDELTHIVPDVISDPTLPRTEDHACPKCSHREAVFFQAQTRRAEEEMRLYYVCTNQNCTHRWTE.

8 residues coordinate Zn(2+): Cys-21, Cys-24, Cys-43, Cys-46, Cys-90, Cys-93, Cys-118, and Cys-123. The C4-type zinc finger occupies 21-46 (CQECNNMLYPKEDKENKILLYACRNC). The TFIIS-type zinc finger occupies 86-128 (EDHACPKCSHREAVFFQAQTRRAEEEMRLYYVCTNQNCTHRWT).

It belongs to the archaeal RpoM/eukaryotic RPA12/RPB9/RPC11 RNA polymerase family. In terms of assembly, component of the RNA polymerase II (Pol II) complex consisting of 12 subunits.

It localises to the nucleus. The protein resides in the nucleolus. Functionally, DNA-dependent RNA polymerase catalyzes the transcription of DNA into RNA using the four ribonucleoside triphosphates as substrates. Component of RNA polymerase II which synthesizes mRNA precursors and many functional non-coding RNAs. Pol II is the central component of the basal RNA polymerase II transcription machinery. It is composed of mobile elements that move relative to each other. RPB9 is part of the upper jaw surrounding the central large cleft and thought to grab the incoming DNA template. The sequence is that of DNA-directed RNA polymerase II subunit RPB9 from Drosophila melanogaster (Fruit fly).